We begin with the raw amino-acid sequence, 47 residues long: Small, acid-soluble spore protein N (47 aa).

Residues Met-1–Glu-47 form a disordered region. A compositionally biased stretch (polar residues) spans Asp-33–Glu-47.

Belongs to the SspN family.

Its subcellular location is the spore core. This chain is Small, acid-soluble spore protein N, found in Geobacillus sp. (strain WCH70).